The primary structure comprises 545 residues: Endo-beta-N-acetylglucosaminidase (545 aa).

The first 36 residues, methionine 1–alanine 36, serve as a signal peptide directing secretion. Positions arginine 51–asparagine 333 constitute a GH18 domain. Glutamate 184 acts as the Proton donor in catalysis. The segment at proline 486 to proline 511 is disordered. The chain crosses the membrane as a helical span at residues glycine 518–leucine 538.

The protein belongs to the glycosyl hydrolase 18 family.

The protein localises to the cell membrane. It catalyses the reaction an N(4)-(oligosaccharide-(1-&gt;3)-[oligosaccharide-(1-&gt;6)]-beta-D-Man-(1-&gt;4)-beta-D-GlcNAc-(1-&gt;4)-alpha-D-GlcNAc)-L-asparaginyl-[protein] + H2O = an oligosaccharide-(1-&gt;3)-[oligosaccharide-(1-&gt;6)]-beta-D-Man-(1-&gt;4)-D-GlcNAc + N(4)-(N-acetyl-beta-D-glucosaminyl)-L-asparaginyl-[protein]. Its function is as follows. Endoglycosidase with broad specificity that cleaves the chitobiose core of high mannose and complex N-linked glycans. Is able to release N-glycans from diverse host glycoproteins such as human and bovine lactoferrin, immunoglobulins A and G, and ribonuclease B. Is active directly on human breast milk - a complex matrix of lipids, oligosaccharides, and proteins with disparate glycosylation types - successfully removing a significant proportion of the total amount of N-glycans. Does not recognize O-linked glycans or free human milk oligosaccharides (HMO). The polypeptide is Endo-beta-N-acetylglucosaminidase (Bifidobacterium longum subsp. infantis (strain ATCC 15697 / DSM 20088 / JCM 1222 / NCTC 11817 / S12)).